Reading from the N-terminus, the 367-residue chain is Dihydroxyacetone phosphate transaminase Cj1437c (367 aa).

Position 219 is an N6-(pyridoxal phosphate)lysine (K219).

The protein belongs to the class-II pyridoxal-phosphate-dependent aminotransferase family. The cofactor is pyridoxal 5'-phosphate.

The catalysed reaction is dihydroxyacetone phosphate + L-glutamate = (S)-serinol phosphate + 2-oxoglutarate. It functions in the pathway capsule biogenesis; capsule polysaccharide biosynthesis. Its function is as follows. Pyridoxal phosphate (PLP)-dependent transaminase involved in the biosynthesis of amidated D-glucuronic acid structures found on the capsular polysaccharide (CPS) of C.jejuni. Catalyzes the transamination of dihydroxyacetone phosphate (DHAP) to (S)-serinol phosphate in the presence of L-glutamate. Less active with L-aspartate. No activity with dihydroxyacetone or L-alanine. This is Dihydroxyacetone phosphate transaminase Cj1437c from Campylobacter jejuni subsp. jejuni serotype O:2 (strain ATCC 700819 / NCTC 11168).